A 348-amino-acid chain; its full sequence is MATVLAIETSCDETAVAIVNNRNVCSSVVASQIALHKTYGGVVPEMASREHLITINACLEEALAQSNLSWSDIDGVAATMAPGLVGALMVGATTAKTLAIVHQKPFVGVHHLEGHIYATYLSDPTWEPPFLCLLVSGGHTSLIWVKDCGFYEQLGATRDDAAGEAFDKVARLLNLGYPGGPVIDRLAKTGNPQAFALPEGRVSLPEGGYHPYDSSFSGLKTAVLRLVQTLEKDDKNSLPVADLAASFQSTVARSLTKKSIACALDYGINSIAVGGGVAANSELRKQLQEAGINHNIKVHFPPLKWCTDNAAMIGCAAADHLNRGHTSSLSLNVNSRLSITDVMQLYEF.

Residues His-111 and His-115 each contribute to the Fe cation site. Substrate is bound by residues 134–138 (LVSGG), Asp-167, Gly-180, Asp-184, and Asn-280. Asp-308 serves as a coordination point for Fe cation.

This sequence belongs to the KAE1 / TsaD family. Fe(2+) serves as cofactor.

The protein resides in the cytoplasm. It catalyses the reaction L-threonylcarbamoyladenylate + adenosine(37) in tRNA = N(6)-L-threonylcarbamoyladenosine(37) in tRNA + AMP + H(+). Functionally, required for the formation of a threonylcarbamoyl group on adenosine at position 37 (t(6)A37) in tRNAs that read codons beginning with adenine. Is involved in the transfer of the threonylcarbamoyl moiety of threonylcarbamoyl-AMP (TC-AMP) to the N6 group of A37, together with TsaE and TsaB. TsaD likely plays a direct catalytic role in this reaction. The polypeptide is tRNA N6-adenosine threonylcarbamoyltransferase (Rippkaea orientalis (strain PCC 8801 / RF-1) (Cyanothece sp. (strain PCC 8801))).